A 262-amino-acid chain; its full sequence is 2-aminoethylphosphonate dioxygenase (262 aa).

Lys-108 serves as a coordination point for 2-oxoglutarate. Residues His-118, Asp-120, and His-198 each contribute to the Fe cation site.

This sequence belongs to the PhyH family. Requires Fe(2+) as cofactor.

It catalyses the reaction (2-aminoethyl)phosphonate + 2-oxoglutarate + O2 = (1R)-(2-amino-1-hydroxyethyl)phosphonate + succinate + CO2. Activity is enhanced by ascorbate. In terms of biological role, involved in the degradation of the organophosphonate 2-aminoethylphosphonic acid (2-AEP). Catalyzes the hydroxylation of 2-aminoethylphosphonic acid to yield (2-amino-1-hydroxyethyl)phosphonic acid. This is 2-aminoethylphosphonate dioxygenase from Uncultured bacterium HF130_AEPn_1.